The sequence spans 250 residues: Triosephosphate isomerase (250 aa).

10 to 12 (NWK) provides a ligand contact to substrate. Histidine 96 (electrophile) is an active-site residue. Glutamate 168 functions as the Proton acceptor in the catalytic mechanism. Substrate contacts are provided by residues glycine 174, serine 214, and 235-236 (GG).

This sequence belongs to the triosephosphate isomerase family. In terms of assembly, homodimer.

It is found in the cytoplasm. The enzyme catalyses D-glyceraldehyde 3-phosphate = dihydroxyacetone phosphate. It participates in carbohydrate biosynthesis; gluconeogenesis. The protein operates within carbohydrate degradation; glycolysis; D-glyceraldehyde 3-phosphate from glycerone phosphate: step 1/1. In terms of biological role, involved in the gluconeogenesis. Catalyzes stereospecifically the conversion of dihydroxyacetone phosphate (DHAP) to D-glyceraldehyde-3-phosphate (G3P). The sequence is that of Triosephosphate isomerase from Streptococcus suis (strain 98HAH33).